Consider the following 311-residue polypeptide: HPr kinase/phosphorylase (311 aa).

Catalysis depends on residues histidine 139 and lysine 160. 154–161 (GESGVGKS) contributes to the ATP binding site. Serine 161 is a binding site for Mg(2+). Aspartate 178 (proton acceptor; for phosphorylation activity. Proton donor; for dephosphorylation activity) is an active-site residue. Positions 202-211 (IEIRGIGILD) are important for the catalytic mechanism of both phosphorylation and dephosphorylation. Glutamate 203 is a Mg(2+) binding site. Arginine 244 is a catalytic residue. The tract at residues 265–270 (PVRPGR) is important for the catalytic mechanism of dephosphorylation.

This sequence belongs to the HPrK/P family. As to quaternary structure, homohexamer. It depends on Mg(2+) as a cofactor.

The enzyme catalyses [HPr protein]-L-serine + ATP = [HPr protein]-O-phospho-L-serine + ADP + H(+). It catalyses the reaction [HPr protein]-O-phospho-L-serine + phosphate + H(+) = [HPr protein]-L-serine + diphosphate. Catalyzes the ATP- as well as the pyrophosphate-dependent phosphorylation of a specific serine residue in HPr, a phosphocarrier protein of the phosphoenolpyruvate-dependent sugar phosphotransferase system (PTS). HprK/P also catalyzes the pyrophosphate-producing, inorganic phosphate-dependent dephosphorylation (phosphorolysis) of seryl-phosphorylated HPr (P-Ser-HPr). The two antagonistic activities of HprK/P are regulated by several intracellular metabolites, which change their concentration in response to the absence or presence of rapidly metabolisable carbon sources (glucose, fructose, etc.) in the growth medium. Therefore, by controlling the phosphorylation state of HPr, HPrK/P is a sensor enzyme that plays a major role in the regulation of carbon metabolism and sugar transport: it mediates carbon catabolite repression (CCR), and regulates PTS-catalyzed carbohydrate uptake and inducer exclusion. This is HPr kinase/phosphorylase from Caldicellulosiruptor bescii (strain ATCC BAA-1888 / DSM 6725 / KCTC 15123 / Z-1320) (Anaerocellum thermophilum).